Consider the following 115-residue polypeptide: Synaptobrevin homolog 2 (115 aa).

Low complexity predominate over residues 1–16 (MSSSVPYDPYVPPEES). The interval 1–28 (MSSSVPYDPYVPPEESNSGANPNSQNKT) is disordered. The Cytoplasmic portion of the chain corresponds to 1–93 (MSSSVPYDPY…MWWKDLKMRM (93 aa)). Over residues 17–28 (NSGANPNSQNKT) the composition is skewed to polar residues. The 61-residue stretch at 27–87 (KTAALRQEID…NRVRKQMWWK (61 aa)) folds into the v-SNARE coiled-coil homology domain. Position 58 is a phosphoserine (serine 58). Lysine 62 participates in a covalent cross-link: Glycyl lysine isopeptide (Lys-Gly) (interchain with G-Cter in ubiquitin). The S-palmitoyl cysteine moiety is linked to residue cysteine 94. A helical; Anchor for type IV membrane protein membrane pass occupies residues 94-112 (CLFLVVIILLVVIIVPIVV). The Vesicular portion of the chain corresponds to 113-115 (HFS).

The protein belongs to the synaptobrevin family. Post-translationally, palmitoylated by SWF1.

Its subcellular location is the endomembrane system. In terms of biological role, SNC1 and SNC2 are vesicle-targeting proteins essential for normal secretory traffic between the Golgi and the plasma membrane. They may also be involved in vesicle fusion. This chain is Synaptobrevin homolog 2 (SNC2), found in Saccharomyces cerevisiae (strain ATCC 204508 / S288c) (Baker's yeast).